The sequence spans 244 residues: rRNA adenine N-6-methyltransferase (244 aa).

6 residues coordinate S-adenosyl-L-methionine: asparagine 11, isoleucine 13, glycine 38, glutamate 59, aspartate 84, and asparagine 101.

This sequence belongs to the class I-like SAM-binding methyltransferase superfamily. rRNA adenine N(6)-methyltransferase family.

It carries out the reaction adenosine(2085) in 23S rRNA + 2 S-adenosyl-L-methionine = N(6)-dimethyladenosine(2085) in 23S rRNA + 2 S-adenosyl-L-homocysteine + 2 H(+). In terms of biological role, this protein produces a dimethylation of the adenine residue at position 2085 in 23S rRNA, resulting in reduced affinity between ribosomes and macrolide-lincosamide-streptogramin B antibiotics. This chain is rRNA adenine N-6-methyltransferase (ermC), found in Staphylococcus aureus.